The chain runs to 201 residues: Small ribosomal subunit protein uS4c (201 aa).

One can recognise an S4 RNA-binding domain in the interval 91–153 (MRLDNIVFRL…NASKKIVETN (63 aa)).

It belongs to the universal ribosomal protein uS4 family. In terms of assembly, part of the 30S ribosomal subunit. Contacts protein S5. The interaction surface between S4 and S5 is involved in control of translational fidelity.

The protein resides in the plastid. It is found in the cyanelle. In terms of biological role, one of the primary rRNA binding proteins, it binds directly to 16S rRNA where it nucleates assembly of the body of the 30S subunit. Functionally, with S5 and S12 plays an important role in translational accuracy. The protein is Small ribosomal subunit protein uS4c (rps4) of Cyanophora paradoxa.